The primary structure comprises 416 residues: Glutamyl-tRNA reductase (416 aa).

Substrate-binding positions include Thr49–Arg52, Ser105, Glu110–Gln112, and Gln116. Residue Cys50 is the Nucleophile of the active site. Gly185 to Ile190 provides a ligand contact to NADP(+).

Belongs to the glutamyl-tRNA reductase family. As to quaternary structure, homodimer.

The catalysed reaction is (S)-4-amino-5-oxopentanoate + tRNA(Glu) + NADP(+) = L-glutamyl-tRNA(Glu) + NADPH + H(+). It participates in porphyrin-containing compound metabolism; protoporphyrin-IX biosynthesis; 5-aminolevulinate from L-glutamyl-tRNA(Glu): step 1/2. Its function is as follows. Catalyzes the NADPH-dependent reduction of glutamyl-tRNA(Glu) to glutamate 1-semialdehyde (GSA). This is Glutamyl-tRNA reductase from Shewanella denitrificans (strain OS217 / ATCC BAA-1090 / DSM 15013).